A 427-amino-acid polypeptide reads, in one-letter code: UBX domain-containing protein 10 (427 aa).

Residues L247–A311 adopt a coiled-coil conformation. In terms of domain architecture, UBX spans S323 to L425.

It localises to the endoplasmic reticulum. In terms of biological role, involved in protein degradation through the ubiquitin/proteasome pathway. This Schizosaccharomyces pombe (strain 972 / ATCC 24843) (Fission yeast) protein is UBX domain-containing protein 10 (ucp10).